A 436-amino-acid chain; its full sequence is UPF0597 protein YhaM (436 aa).

The protein belongs to the UPF0597 family.

The protein is UPF0597 protein YhaM of Salmonella gallinarum (strain 287/91 / NCTC 13346).